A 400-amino-acid chain; its full sequence is Subtilisin-like protease 1 (400 aa).

A signal peptide spans 1 to 20; sequence MKFSQSLIALAACFLPLIAA. The propeptide occupies 21–119; the sequence is APVEAQHAKI…IEMDGKVQAN (99 aa). In terms of domain architecture, Inhibitor I9 spans 42 to 117; the sequence is SYIVVFNKGV…AWIEMDGKVQ (76 aa). Residue Asn82 is glycosylated (N-linked (GlcNAc...) asparagine). A Peptidase S8 domain is found at 128–400; sequence TWGLGRISHK…NLIAYNGNGA (273 aa). Catalysis depends on charge relay system residues Asp160, His192, and Ser345.

Belongs to the peptidase S8 family.

The protein resides in the secreted. Functionally, major secreted subtilisin-like serine endopeptidase. Mediates the degradation of collagen, the major structural protein in the mammalian host. Degrades the nonhelical regions of collagen that function in the cross-linking of the helical components. May function as virulence factor involved in epidermal wing necrosis observed in white nose syndrome (WNS) in bats. The protein is Subtilisin-like protease 1 of Pseudogymnoascus destructans (strain ATCC MYA-4855 / 20631-21) (Bat white-nose syndrome fungus).